A 641-amino-acid polypeptide reads, in one-letter code: Lipase (641 aa).

Residues 1–38 form the signal peptide; the sequence is MKETKHQHTFSIRKSAYGAASVMVASCIFVIGGGVAEA. 2 disordered regions span residues 41 to 174 and 206 to 246; these read STTQ…PSVD and TVSP…KPTV. A compositionally biased stretch (low complexity) spans 53–64; sequence QTSQQETHTHQT. Residues 73–94 are compositionally biased toward basic and acidic residues; the sequence is TPEHVDDSKEATPLPEKAESPK. Composition is skewed to polar residues over residues 95–106 and 127–139; these read TEVTVQPSSHTQ and PEST…VESN. A compositionally biased stretch (basic and acidic residues) spans 140-165; that stretch reads KATENEMSPVEHHASNVEKREDRLET. Residues 227 to 239 show a composition bias toward polar residues; the sequence is ENTTAQNKFTSQA. The active-site Nucleophile is S369. G535 lines the Ca(2+) pocket. D559 serves as the catalytic Charge relay system. Residue D599 coordinates Ca(2+). The Charge relay system role is filled by H600. Positions 602, 607, and 610 each coordinate Ca(2+).

Belongs to the AB hydrolase superfamily. Lipase family. The cofactor is Ca(2+).

The protein localises to the secreted. The enzyme catalyses a triacylglycerol + H2O = a diacylglycerol + a fatty acid + H(+). The catalysed reaction is a 1,2-diacyl-sn-glycero-3-phosphocholine + H2O = a 2-acyl-sn-glycero-3-phosphocholine + a fatty acid + H(+). Has a broad substrate specificity hydrolyzing a variety of triglycerides and phosphatidylcholines. The protein is Lipase (lip) of Staphylococcus hyicus.